We begin with the raw amino-acid sequence, 423 residues long: Heat shock transcription factor, X-linked (423 aa).

The span at 1-25 shows a compositional bias: basic and acidic residues; the sequence is MEDKRSLSMARCEERNSRGQDHGLE. Disordered regions lie at residues 1–56, 215–303, and 397–423; these read MEDK…STGS, KSAP…EGSQ, and PHSH…DQST. Residues 98-282 mediate DNA binding; sequence PFPQKLWRLV…PATPVMVPDS (185 aa). Residue K215 forms a Glycyl lysine isopeptide (Lys-Gly) (interchain with G-Cter in SUMO1) linkage. Positions 243 to 254 are enriched in polar residues; it reads HTSPNENDQVTP.

It belongs to the HSF family. In terms of tissue distribution, testis-specific.

It is found in the nucleus. The protein resides in the cytoplasm. The protein is Heat shock transcription factor, X-linked (HSFX1) of Homo sapiens (Human).